A 354-amino-acid chain; its full sequence is Isopentenyl-diphosphate delta-isomerase (354 aa).

Position 6 to 7 (6 to 7 (RK)) interacts with substrate. Residues 63 to 65 (AMT), S93, and N122 contribute to the FMN site. Substrate is bound at residue 93–95 (SQR). Q160 is a binding site for substrate. A Mg(2+)-binding site is contributed by E161. Residues K192, T221, 273-275 (GIR), and 294-295 (SQ) contribute to the FMN site.

It belongs to the IPP isomerase type 2 family. Homooctamer. Dimer of tetramers. The cofactor is FMN. NADPH is required as a cofactor. Mg(2+) serves as cofactor.

Its subcellular location is the cytoplasm. The enzyme catalyses isopentenyl diphosphate = dimethylallyl diphosphate. Its function is as follows. Involved in the biosynthesis of isoprenoids. Catalyzes the 1,3-allylic rearrangement of the homoallylic substrate isopentenyl (IPP) to its allylic isomer, dimethylallyl diphosphate (DMAPP). The sequence is that of Isopentenyl-diphosphate delta-isomerase from Pyrobaculum islandicum (strain DSM 4184 / JCM 9189 / GEO3).